We begin with the raw amino-acid sequence, 274 residues long: Rhamnulose-1-phosphate aldolase (274 aa).

Residue E117 is part of the active site. The Zn(2+) site is built by H141, H143, and H212.

It belongs to the aldolase class II family. RhaD subfamily. Homotetramer. Zn(2+) serves as cofactor.

Its subcellular location is the cytoplasm. It carries out the reaction L-rhamnulose 1-phosphate = (S)-lactaldehyde + dihydroxyacetone phosphate. It participates in carbohydrate degradation; L-rhamnose degradation; glycerone phosphate from L-rhamnose: step 3/3. Its function is as follows. Catalyzes the reversible cleavage of L-rhamnulose-1-phosphate to dihydroxyacetone phosphate (DHAP) and L-lactaldehyde. This is Rhamnulose-1-phosphate aldolase from Escherichia coli O81 (strain ED1a).